The following is a 131-amino-acid chain: uncharacterized protein (131 aa).

This is an uncharacterized protein from Mycobacterium tuberculosis (strain CDC 1551 / Oshkosh).